An 86-amino-acid polypeptide reads, in one-letter code: MTYEQLYKEFHSSKSFQPFIHLDTQPKFAICGLIVTLAVLSSALFAVGSKSSYIKKLFFYTILSVIGSLFAGLTTVFASNSFGVYV.

Residues threonine 2–lysine 27 are Lumenal-facing. Residues phenylalanine 28–glycine 48 traverse the membrane as a helical segment. Over serine 49–lysine 56 the chain is Cytoplasmic. Residues leucine 57–phenylalanine 77 form a helical membrane-spanning segment. At alanine 78 to valine 86 the chain is on the lumenal side.

The protein belongs to the OST5 family. As to quaternary structure, component of the oligosaccharyltransferase (OST) complex, which appears to exist in two assemblies comprising OST1, OST2, OST4, OST5, STT3, SWP1, WPB1, and either OST3 or OST6. OST assembly occurs through the formation of 3 subcomplexes. Subcomplex 1 contains OST1 and OST5, subcomplex 2 contains STT3, OST3, and OST4, and subcomplex 3 contains OST2, WBP1, and SWP1.

It is found in the endoplasmic reticulum membrane. It participates in protein modification; protein glycosylation. Subunit of the oligosaccharyl transferase (OST) complex that catalyzes the initial transfer of a defined glycan (Glc(3)Man(9)GlcNAc(2) in eukaryotes) from the lipid carrier dolichol-pyrophosphate to an asparagine residue within an Asn-X-Ser/Thr consensus motif in nascent polypeptide chains, the first step in protein N-glycosylation. N-glycosylation occurs cotranslationally and the complex associates with the Sec61 complex at the channel-forming translocon complex that mediates protein translocation across the endoplasmic reticulum (ER). All subunits are required for a maximal enzyme activity. This Saccharomyces cerevisiae (strain ATCC 204508 / S288c) (Baker's yeast) protein is Dolichyl-diphosphooligosaccharide--protein glycosyltransferase subunit OST5 (OST5).